The primary structure comprises 804 residues: Leucine--tRNA ligase (804 aa).

A 'HIGH' region motif is present at residues 40–51; it reads PYPSGAGLHVGH. The 'KMSKS' region signature appears at 576 to 580; the sequence is KMSKS. Lysine 579 contacts ATP.

It belongs to the class-I aminoacyl-tRNA synthetase family.

It is found in the cytoplasm. It catalyses the reaction tRNA(Leu) + L-leucine + ATP = L-leucyl-tRNA(Leu) + AMP + diphosphate. The protein is Leucine--tRNA ligase of Staphylococcus aureus (strain MRSA252).